The primary structure comprises 129 residues: Putative membrane protein insertion efficiency factor (129 aa).

The protein belongs to the UPF0161 family.

The protein resides in the cell inner membrane. Its function is as follows. Could be involved in insertion of integral membrane proteins into the membrane. The sequence is that of Putative membrane protein insertion efficiency factor from Rhodopseudomonas palustris (strain ATCC BAA-98 / CGA009).